A 141-amino-acid polypeptide reads, in one-letter code: Ribonuclease P protein component (141 aa).

Disordered stretches follow at residues 37-56 (RTEE…VGFT) and 114-141 (RRIT…VNGK). Basic and acidic residues predominate over residues 114–124 (RRITAKGERRS).

The protein belongs to the RnpA family. As to quaternary structure, consists of a catalytic RNA component (M1 or rnpB) and a protein subunit.

The enzyme catalyses Endonucleolytic cleavage of RNA, removing 5'-extranucleotides from tRNA precursor.. RNaseP catalyzes the removal of the 5'-leader sequence from pre-tRNA to produce the mature 5'-terminus. It can also cleave other RNA substrates such as 4.5S RNA. The protein component plays an auxiliary but essential role in vivo by binding to the 5'-leader sequence and broadening the substrate specificity of the ribozyme. The polypeptide is Ribonuclease P protein component (Brucella melitensis biotype 2 (strain ATCC 23457)).